Consider the following 147-residue polypeptide: Hemoglobin subunit beta-1 (147 aa).

The region spanning 3-147 (EWTATERTHI…VVSALGRQYH (145 aa)) is the Globin domain. Residues H64 and H93 each contribute to the heme b site.

Belongs to the globin family. As to quaternary structure, hb 1 is a heterotetramer of two alpha-1 and two beta-1 chains. Hb 2 is a heterotetramer of two alpha-2 and two beta-1 chains. In terms of tissue distribution, red blood cells.

In terms of biological role, involved in oxygen transport from gills to the various peripheral tissues. The protein is Hemoglobin subunit beta-1 (hbb1) of Boreogadus saida (Polar cod).